We begin with the raw amino-acid sequence, 148 residues long: uncharacterized protein (148 aa).

4 helical membrane-spanning segments follow: residues 29 to 49 (FSLVIVTLMMSIVVVLAAAKE), 61 to 81 (PIILMISIGIVVFLLIPPLVM), 99 to 119 (FIVFTFLGLIPIGFLIPNGFL), and 121 to 141 (ILVSIAGTLVSIASVAVTLCI).

The protein localises to the cell membrane. This is an uncharacterized protein from Bacillus subtilis (strain 168).